The following is a 359-amino-acid chain: MKQSIRDKLELLTHRLAELDRELSSGDAVRDMDGFRSLGRERAEIEPVVALYGAYRQAEADCESARAMLADAEMRELAESELETGAVRLQALEAELQCALLPCDPSDERNLFLEVRAGTGGDEASLFAGDLLRMYTRYAERQRWKVEIVSSSPSDLGGYKEVILRIAGAGAYSKLKFESGGHRVQRIPVTETQGRIHTSACTVAVMPEADEVEAVNINPADLRIDTFRASGAGGQHINKTDSAVRITHLPTGIVVECQDDRSQHRNRAQAMSVLAARIQDRQLREQQAREAATRKSLVGSGDRSERIRTYNYPQGRVTDHRINLTLYKLDAVMQGDLDELVDALTREHQADQLAALGGG.

Q235 is subject to N5-methylglutamine.

The protein belongs to the prokaryotic/mitochondrial release factor family. Post-translationally, methylated by PrmC. Methylation increases the termination efficiency of RF1.

The protein localises to the cytoplasm. Peptide chain release factor 1 directs the termination of translation in response to the peptide chain termination codons UAG and UAA. The polypeptide is Peptide chain release factor 1 (Aromatoleum aromaticum (strain DSM 19018 / LMG 30748 / EbN1) (Azoarcus sp. (strain EbN1))).